Reading from the N-terminus, the 360-residue chain is Threonine synthase (360 aa).

Lys69 is subject to N6-(pyridoxal phosphate)lysine. Pyridoxal 5'-phosphate is bound by residues Asn95, 196–200 (GNAGN), and Thr326.

This sequence belongs to the threonine synthase family. In terms of assembly, homodimer. The cofactor is pyridoxal 5'-phosphate.

The enzyme catalyses O-phospho-L-homoserine + H2O = L-threonine + phosphate. It functions in the pathway amino-acid biosynthesis; L-threonine biosynthesis; L-threonine from L-aspartate: step 5/5. Functionally, catalyzes the gamma-elimination of phosphate from L-phosphohomoserine and the beta-addition of water to produce L-threonine. In Mycobacterium leprae (strain TN), this protein is Threonine synthase (thrC).